Consider the following 74-residue polypeptide: Male-specific sperm protein Mst84Db (74 aa).

Belongs to the MST(3)CGP family. As to expression, testis.

The polypeptide is Male-specific sperm protein Mst84Db (Mst84Db) (Drosophila melanogaster (Fruit fly)).